The chain runs to 208 residues: Putative ribosomal protein uS2-like (208 aa).

This sequence belongs to the universal ribosomal protein uS2 family.

It is found in the plastid. Its subcellular location is the chloroplast. In Chlamydomonas reinhardtii (Chlamydomonas smithii), this protein is Putative ribosomal protein uS2-like (rps2-2).